The following is a 254-amino-acid chain: Ribosomal RNA small subunit methyltransferase J (254 aa).

S-adenosyl-L-methionine-binding positions include 106–107 (RD) and aspartate 177.

The protein belongs to the methyltransferase superfamily. RsmJ family.

It is found in the cytoplasm. The enzyme catalyses guanosine(1516) in 16S rRNA + S-adenosyl-L-methionine = N(2)-methylguanosine(1516) in 16S rRNA + S-adenosyl-L-homocysteine + H(+). Functionally, specifically methylates the guanosine in position 1516 of 16S rRNA. The protein is Ribosomal RNA small subunit methyltransferase J of Nitrosococcus oceani (strain ATCC 19707 / BCRC 17464 / JCM 30415 / NCIMB 11848 / C-107).